The chain runs to 174 residues: UPF0316 protein lmo1776 (174 aa).

Transmembrane regions (helical) follow at residues 4-24, 36-56, and 62-82; these read GIFI…IYTV, LAAL…SLVL, and IANV…GMKI.

The protein belongs to the UPF0316 family.

It localises to the cell membrane. The protein is UPF0316 protein lmo1776 of Listeria monocytogenes serovar 1/2a (strain ATCC BAA-679 / EGD-e).